A 725-amino-acid polypeptide reads, in one-letter code: D-(-)-3-hydroxybutyrate oligomer hydrolase (725 aa).

Positions 1–22 (MNTTRDANRLRQRASLSGLALA) are cleaved as a signal peptide. Catalysis depends on serine 322, which acts as the Charge relay system.

The protein belongs to the D-(-)-3-hydroxybutyrate oligomer hydrolase family.

It is found in the secreted. The enzyme catalyses (3R)-hydroxybutanoate dimer + H2O = 2 (R)-3-hydroxybutanoate + H(+). It functions in the pathway lipid metabolism; butanoate metabolism. Participates in the degradation of poly-3-hydroxybutyrate (PHB). It works downstream of poly(3-hydroxybutyrate) depolymerase, hydrolyzing D(-)-3-hydroxybutyrate oligomers of various length (3HB-oligomers) into 3HB-monomers. The chain is D-(-)-3-hydroxybutyrate oligomer hydrolase from Ralstonia nicotianae (strain ATCC BAA-1114 / GMI1000) (Ralstonia solanacearum).